Reading from the N-terminus, the 272-residue chain is NH(3)-dependent NAD(+) synthetase (272 aa).

Residue 45–52 (GISGGQDS) participates in ATP binding. D51 serves as a coordination point for Mg(2+). Residue R138 participates in deamido-NAD(+) binding. T158 is a binding site for ATP. Mg(2+) is bound at residue E163. 2 residues coordinate deamido-NAD(+): K171 and D178. ATP-binding residues include K187 and T209. A deamido-NAD(+)-binding site is contributed by 258–259 (HK).

It belongs to the NAD synthetase family. In terms of assembly, homodimer.

It catalyses the reaction deamido-NAD(+) + NH4(+) + ATP = AMP + diphosphate + NAD(+) + H(+). It functions in the pathway cofactor biosynthesis; NAD(+) biosynthesis; NAD(+) from deamido-NAD(+) (ammonia route): step 1/1. Catalyzes the ATP-dependent amidation of deamido-NAD to form NAD. Uses ammonia as a nitrogen source. This is NH(3)-dependent NAD(+) synthetase from Bacillus cereus (strain AH187).